A 360-amino-acid polypeptide reads, in one-letter code: Peptide chain release factor 1 (360 aa).

An N5-methylglutamine modification is found at Gln235.

Belongs to the prokaryotic/mitochondrial release factor family. In terms of processing, methylated by PrmC. Methylation increases the termination efficiency of RF1.

It localises to the cytoplasm. Functionally, peptide chain release factor 1 directs the termination of translation in response to the peptide chain termination codons UAG and UAA. The polypeptide is Peptide chain release factor 1 (Methylobacillus flagellatus (strain ATCC 51484 / DSM 6875 / VKM B-1610 / KT)).